Consider the following 156-residue polypeptide: 6,7-dimethyl-8-ribityllumazine synthase (156 aa).

5-amino-6-(D-ribitylamino)uracil-binding positions include phenylalanine 22, 56–58, and 80–82; these read AME and AVI. Residue 85-86 participates in (2S)-2-hydroxy-3-oxobutyl phosphate binding; sequence ET. Histidine 88 (proton donor) is an active-site residue. Phenylalanine 113 provides a ligand contact to 5-amino-6-(D-ribitylamino)uracil. Arginine 127 serves as a coordination point for (2S)-2-hydroxy-3-oxobutyl phosphate.

The protein belongs to the DMRL synthase family.

The catalysed reaction is (2S)-2-hydroxy-3-oxobutyl phosphate + 5-amino-6-(D-ribitylamino)uracil = 6,7-dimethyl-8-(1-D-ribityl)lumazine + phosphate + 2 H2O + H(+). It functions in the pathway cofactor biosynthesis; riboflavin biosynthesis; riboflavin from 2-hydroxy-3-oxobutyl phosphate and 5-amino-6-(D-ribitylamino)uracil: step 1/2. Functionally, catalyzes the formation of 6,7-dimethyl-8-ribityllumazine by condensation of 5-amino-6-(D-ribitylamino)uracil with 3,4-dihydroxy-2-butanone 4-phosphate. This is the penultimate step in the biosynthesis of riboflavin. The protein is 6,7-dimethyl-8-ribityllumazine synthase of Kosmotoga olearia (strain ATCC BAA-1733 / DSM 21960 / TBF 19.5.1).